Here is a 1265-residue protein sequence, read N- to C-terminus: 5-oxoprolinase (1265 aa).

The protein belongs to the oxoprolinase family. As to quaternary structure, homodimer.

The protein localises to the cytoplasm. The protein resides in the cytosol. The enzyme catalyses 5-oxo-L-proline + ATP + 2 H2O = L-glutamate + ADP + phosphate + H(+). Its function is as follows. Catalyzes the cleavage of 5-oxo-L-proline to form L-glutamate coupled to the hydrolysis of ATP to ADP and inorganic phosphate. The chain is 5-oxoprolinase (oplah) from Dictyostelium discoideum (Social amoeba).